Here is a 128-residue protein sequence, read N- to C-terminus: Large ribosomal subunit protein bL19 (128 aa).

It belongs to the bacterial ribosomal protein bL19 family.

In terms of biological role, this protein is located at the 30S-50S ribosomal subunit interface and may play a role in the structure and function of the aminoacyl-tRNA binding site. The protein is Large ribosomal subunit protein bL19 of Mesoplasma florum (strain ATCC 33453 / NBRC 100688 / NCTC 11704 / L1) (Acholeplasma florum).